The sequence spans 396 residues: NADH-quinone oxidoreductase subunit D (396 aa).

The protein belongs to the complex I 49 kDa subunit family. As to quaternary structure, NDH-1 is composed of 14 different subunits. Subunits NuoB, C, D, E, F, and G constitute the peripheral sector of the complex.

It localises to the cell inner membrane. The catalysed reaction is a quinone + NADH + 5 H(+)(in) = a quinol + NAD(+) + 4 H(+)(out). Functionally, NDH-1 shuttles electrons from NADH, via FMN and iron-sulfur (Fe-S) centers, to quinones in the respiratory chain. The immediate electron acceptor for the enzyme in this species is believed to be ubiquinone. Couples the redox reaction to proton translocation (for every two electrons transferred, four hydrogen ions are translocated across the cytoplasmic membrane), and thus conserves the redox energy in a proton gradient. The sequence is that of NADH-quinone oxidoreductase subunit D from Methylobacterium sp. (strain 4-46).